The primary structure comprises 295 residues: Probable alpha-L-glutamate ligase 1 (295 aa).

Residues 104-287 (MQLLSRKGIG…VANAIIEFIE (184 aa)) form the ATP-grasp domain. ATP contacts are provided by residues K141, 178–179 (EY), D187, and 211–213 (RSN). Mg(2+) is bound by residues D248, E260, and N262. 3 residues coordinate Mn(2+): D248, E260, and N262.

This sequence belongs to the RimK family. The cofactor is Mg(2+). Mn(2+) serves as cofactor.

This chain is Probable alpha-L-glutamate ligase 1, found in Shewanella denitrificans (strain OS217 / ATCC BAA-1090 / DSM 15013).